The following is a 305-amino-acid chain: Heat stress transcription factor B-4d (305 aa).

Positions 201 to 230 are hydrophobic repeat HR-A/B; sequence LRRRNSLLLSELAHMRKLYNDIIYFLQNHV. The short motif at 286–289 is the Nuclear localization signal element; it reads KKRR. A disordered region spans residues 286–305; the sequence is KKRRVQLVQEDEGDEQGSEG. A compositionally biased stretch (acidic residues) spans 294 to 305; that stretch reads QEDEGDEQGSEG.

This sequence belongs to the HSF family. Class B subfamily. In terms of assembly, homotrimer. Post-translationally, exhibits temperature-dependent phosphorylation.

The protein resides in the nucleus. Functionally, transcriptional regulator that specifically binds DNA of heat shock promoter elements (HSE). The polypeptide is Heat stress transcription factor B-4d (HSFB4D) (Oryza sativa subsp. japonica (Rice)).